A 473-amino-acid chain; its full sequence is ATP synthase subunit beta (473 aa).

Position 158-165 (G158–T165) interacts with ATP.

This sequence belongs to the ATPase alpha/beta chains family. F-type ATPases have 2 components, CF(1) - the catalytic core - and CF(0) - the membrane proton channel. CF(1) has five subunits: alpha(3), beta(3), gamma(1), delta(1), epsilon(1). CF(0) has three main subunits: a(1), b(2) and c(9-12). The alpha and beta chains form an alternating ring which encloses part of the gamma chain. CF(1) is attached to CF(0) by a central stalk formed by the gamma and epsilon chains, while a peripheral stalk is formed by the delta and b chains.

The protein localises to the cell membrane. The enzyme catalyses ATP + H2O + 4 H(+)(in) = ADP + phosphate + 5 H(+)(out). Functionally, produces ATP from ADP in the presence of a proton gradient across the membrane. The catalytic sites are hosted primarily by the beta subunits. The chain is ATP synthase subunit beta from Geobacillus thermoleovorans (Bacillus thermoleovorans).